A 53-amino-acid polypeptide reads, in one-letter code: uncharacterized protein (53 aa).

Belongs to the ycf15 family.

The protein localises to the plastid. The protein resides in the chloroplast. This is an uncharacterized protein from Helianthus annuus (Common sunflower).